The following is a 538-amino-acid chain: Thiamine transport system permease protein ThiP (538 aa).

12 helical membrane-spanning segments follow: residues 19–39 (VVVI…IFAL), 57–77 (LILF…FFGL), 97–117 (LMSL…IGIY), 141–161 (LSGI…QLFL), 202–222 (FSLI…LGGG), 242–262 (LPKA…LFSL), 293–313 (ILVL…ILIS), 337–357 (LSIA…LLLL), 376–396 (AGMV…FLLL), 406–426 (LFII…LRIL), 466–486 (YAFA…ALFG), and 509–529 (AAVT…FIHT). The ABC transmembrane type-1 1 domain occupies 58–263 (ILFSFGQALL…VFCLILFSLT (206 aa)). One can recognise an ABC transmembrane type-1 2 domain in the interval 333–528 (LGYSLSIAPL…LCGILFAFIH (196 aa)).

Belongs to the binding-protein-dependent transport system permease family. CysTW subfamily. The complex is composed of two ATP-binding proteins (ThiQ), two transmembrane proteins (ThiP) and a solute-binding protein (ThiB).

It is found in the cell inner membrane. Part of the ABC transporter complex ThiBPQ involved in thiamine import. Probably responsible for the translocation of the substrate across the membrane. The chain is Thiamine transport system permease protein ThiP (thiP) from Haemophilus influenzae (strain ATCC 51907 / DSM 11121 / KW20 / Rd).